The primary structure comprises 433 residues: uncharacterized protein (433 aa).

The region spanning 61–178 (RFNHSLGVYE…QIDADRMDYL (118 aa)) is the HD domain.

This is an uncharacterized protein from Bacillus subtilis (strain 168).